The primary structure comprises 115 residues: MTLDPDIAVRLKRNAEGLFTAVVQERSSGDVLMVAWMDDQALARTLETREANYYSRSRAEQWIKGSTSGNTQHVHSVRLDCDGDTVLLTVDQVGGACHTGAHSCFDSAMLLAPQD.

Asp80 contributes to the Mg(2+) binding site. Cys81 contacts Zn(2+). Mg(2+) contacts are provided by Asp82 and Asp84. The Zn(2+) site is built by Cys97 and Cys104.

The protein belongs to the PRA-CH family. Homodimer. The cofactor is Mg(2+). Requires Zn(2+) as cofactor.

Its subcellular location is the cytoplasm. The enzyme catalyses 1-(5-phospho-beta-D-ribosyl)-5'-AMP + H2O = 1-(5-phospho-beta-D-ribosyl)-5-[(5-phospho-beta-D-ribosylamino)methylideneamino]imidazole-4-carboxamide. It functions in the pathway amino-acid biosynthesis; L-histidine biosynthesis; L-histidine from 5-phospho-alpha-D-ribose 1-diphosphate: step 3/9. Its function is as follows. Catalyzes the hydrolysis of the adenine ring of phosphoribosyl-AMP. This is Phosphoribosyl-AMP cyclohydrolase from Mycobacterium leprae (strain Br4923).